We begin with the raw amino-acid sequence, 735 residues long: Ion-translocating oxidoreductase complex subunit C (735 aa).

4Fe-4S ferredoxin-type domains follow at residues 368–397 (MGAP…QQLY) and 407–436 (KATA…VQYF). Residues cysteine 377, cysteine 380, cysteine 383, cysteine 387, cysteine 416, cysteine 419, cysteine 422, and cysteine 426 each contribute to the [4Fe-4S] cluster site. Residues 562–713 (AIARAKARKQ…AEPADPRKAA (152 aa)) are disordered.

It belongs to the 4Fe4S bacterial-type ferredoxin family. RnfC subfamily. As to quaternary structure, the complex is composed of six subunits: RsxA, RsxB, RsxC, RsxD, RsxE and RsxG. It depends on [4Fe-4S] cluster as a cofactor.

Its subcellular location is the cell inner membrane. Its function is as follows. Part of a membrane-bound complex that couples electron transfer with translocation of ions across the membrane. Required to maintain the reduced state of SoxR. This is Ion-translocating oxidoreductase complex subunit C from Salmonella newport (strain SL254).